We begin with the raw amino-acid sequence, 77 residues long: U14-theraphotoxin-Cg1a 3 (77 aa).

Residues 1–21 (MKTSVLLVILGIAAITVQCTA) form the signal peptide. The propeptide occupies 22–49 (SESVEQDSLRTFVDTVLGWNAEMASEAR). Disulfide bonds link Cys50-Cys64, Cys57-Cys69, and Cys63-Cys75. Lysine amide is present on Lys77.

This sequence belongs to the neurotoxin 10 (Hwtx-1) family. 65 (Jztx-21) subfamily. In terms of tissue distribution, expressed by the venom gland.

Its subcellular location is the secreted. Probable ion channel inhibitor. The polypeptide is U14-theraphotoxin-Cg1a 3 (Chilobrachys guangxiensis (Chinese earth tiger tarantula)).